The sequence spans 730 residues: UvrABC system protein C (730 aa).

Residues 16 to 95 form the GIY-YIG domain; it reads AAPGVYKFRD…IKEFDPRFNV (80 aa). Residues 208 to 243 enclose the UVR domain; the sequence is DKLVKDLEKRMQQASEDLDFETAARLRDDIGALRKA. Residues 678-730 are disordered; that stretch reads ARALPAAVGDDELDKESESSVTSADAPSAESGSGDEGSESRELSMPTTGPSAQ.

The protein belongs to the UvrC family. As to quaternary structure, interacts with UvrB in an incision complex.

The protein localises to the cytoplasm. Its function is as follows. The UvrABC repair system catalyzes the recognition and processing of DNA lesions. UvrC both incises the 5' and 3' sides of the lesion. The N-terminal half is responsible for the 3' incision and the C-terminal half is responsible for the 5' incision. This is UvrABC system protein C from Rhodococcus erythropolis (strain PR4 / NBRC 100887).